Here is a 111-residue protein sequence, read N- to C-terminus: Vacuolar ATPase assembly integral membrane protein VMA21 (111 aa).

Over 1-39 (MATRRIVATEKSILEKDDHIGSSPAAGEKSNITPAVPLD) the chain is Cytoplasmic. The chain crosses the membrane as a helical span at residues 40–60 (VILKLLAFTLAMVVIPIGSYF). Residues 61–73 (VTVNSIFKGNSTY) are Lumenal-facing. Residues 74–94 (AGALAAIMANVVLVAYVVVAM) traverse the membrane as a helical segment. Topologically, residues 95-111 (NEDQTEQEKAKEGKKDR) are cytoplasmic. Residues 108 to 111 (KKDR) carry the Prevents secretion from ER motif.

The protein belongs to the VMA21 family.

The protein localises to the endoplasmic reticulum membrane. It localises to the endoplasmic reticulum-Golgi intermediate compartment membrane. Its subcellular location is the cytoplasmic vesicle. It is found in the COPII-coated vesicle membrane. In terms of biological role, required for the assembly of the V0 complex of the vacuolar ATPase (V-ATPase) in the endoplasmic reticulum. The sequence is that of Vacuolar ATPase assembly integral membrane protein VMA21 from Pyricularia oryzae (strain 70-15 / ATCC MYA-4617 / FGSC 8958) (Rice blast fungus).